We begin with the raw amino-acid sequence, 106 residues long: ATP-dependent Clp protease adapter protein ClpS (106 aa).

It belongs to the ClpS family. As to quaternary structure, binds to the N-terminal domain of the chaperone ClpA.

In terms of biological role, involved in the modulation of the specificity of the ClpAP-mediated ATP-dependent protein degradation. The protein is ATP-dependent Clp protease adapter protein ClpS of Escherichia fergusonii (strain ATCC 35469 / DSM 13698 / CCUG 18766 / IAM 14443 / JCM 21226 / LMG 7866 / NBRC 102419 / NCTC 12128 / CDC 0568-73).